A 536-amino-acid chain; its full sequence is Beta-hexosaminidase subunit beta (536 aa).

The N-terminal stretch at Met1–Leu31 is a signal peptide. Asn63 is a glycosylation site (N-linked (GlcNAc...) asparagine). Residues Cys70 and Cys116 are joined by a disulfide bond. Asn169 and Asn306 each carry an N-linked (GlcNAc...) asparagine glycan. Disulfide bonds link Cys288–Cys339 and Cys513–Cys530. The Proton donor role is filled by Glu334.

The protein belongs to the glycosyl hydrolase 20 family. As to quaternary structure, there are 3 forms of beta-hexosaminidase: hexosaminidase A is a heterodimer composed of one subunit alpha and one subunit beta (chain A and B); hexosaminidase B is a homodimer of two beta subunits (two chains A and B); hexosaminidase S is a homodimer of two alpha subunits. The composition of the dimer (isozyme A versus isozyme S) has a significant effect on the substrate specificity of the alpha subunit active site.

The protein localises to the lysosome. The protein resides in the cytoplasmic vesicle. Its subcellular location is the secretory vesicle. It localises to the cortical granule. It carries out the reaction Hydrolysis of terminal non-reducing N-acetyl-D-hexosamine residues in N-acetyl-beta-D-hexosaminides.. It catalyses the reaction N-acetyl-beta-D-galactosaminyl-(1-&gt;4)-beta-D-3-sulfogalactosyl-(1-&gt;4)-beta-D-glucosyl-(1&lt;-&gt;1')-ceramide + H2O = a beta-D-3-sulfogalactosyl-(1-&gt;4)-beta-D-glucosyl-(1&lt;-&gt;1')-ceramide + N-acetyl-beta-D-galactosamine. The enzyme catalyses a ganglioside GM2 (d18:1(4E)) + H2O = a ganglioside GM3 (d18:1(4E)) + N-acetyl-beta-D-galactosamine. The catalysed reaction is a ganglioside GM2 + H2O = a ganglioside GM3 + N-acetyl-beta-D-galactosamine. It carries out the reaction beta-D-GalNAc-(1-&gt;4)-alpha-L-IdoA-(1-&gt;3)-beta-D-GalNAc-4-sulfate-(1-&gt;4)-alpha-L-IdoA-(1-&gt;3)-D-GalNAc-4-sulfate + H2O = alpha-L-IdoA-(1-&gt;3)-beta-D-GalNAc-4-sulfate-(1-&gt;4)-alpha-L-IdoA-(1-&gt;3)-D-GalNAc-4-sulfate + N-acetyl-D-galactosamine. It catalyses the reaction N-acetyl-beta-D-6-sulfogalactosaminyl-(1-&gt;4)-alpha-L-iduronyl-(1-&gt;3)-N-acetyl-D-6-sulfogalactosamine + H2O = alpha-L-iduronyl-(1-&gt;3)-N-acetyl-D-6-sulfogalactosamine + N-acetyl-D-6-sulfogalactosamine. Addition of GM2A stimulates the hydrolysis of sulfated glycosphingolipid SM2 and the ganglioside GM2. Hydrolyzes the non-reducing end N-acetyl-D-hexosamine and/or sulfated N-acetyl-D-hexosamine of glycoconjugates, such as the oligosaccharide moieties from proteins and neutral glycolipids, or from certain mucopolysaccharides. The isozyme B does not hydrolyze each of these substrates, however hydrolyzes efficiently neutral oligosaccharide. Only the isozyme A is responsible for the degradation of GM2 gangliosides in the presence of GM2A. During fertilization is responsible, at least in part, for the zona block to polyspermy. Present in the cortical granules of non-activated oocytes, is exocytosed during the cortical reaction in response to oocyte activation and inactivates the sperm galactosyltransferase-binding site, accounting for the block in sperm binding to the zona pellucida. This chain is Beta-hexosaminidase subunit beta, found in Mus musculus (Mouse).